The following is a 289-amino-acid chain: tRNA-cytidine(32) 2-sulfurtransferase (289 aa).

A PP-loop motif motif is present at residues 39–44 (SGGKDS). [4Fe-4S] cluster contacts are provided by Cys-114, Cys-117, and Cys-205.

It belongs to the TtcA family. In terms of assembly, homodimer. The cofactor is Mg(2+). It depends on [4Fe-4S] cluster as a cofactor.

Its subcellular location is the cytoplasm. It carries out the reaction cytidine(32) in tRNA + S-sulfanyl-L-cysteinyl-[cysteine desulfurase] + AH2 + ATP = 2-thiocytidine(32) in tRNA + L-cysteinyl-[cysteine desulfurase] + A + AMP + diphosphate + H(+). It functions in the pathway tRNA modification. Catalyzes the ATP-dependent 2-thiolation of cytidine in position 32 of tRNA, to form 2-thiocytidine (s(2)C32). The sulfur atoms are provided by the cysteine/cysteine desulfurase (IscS) system. The sequence is that of tRNA-cytidine(32) 2-sulfurtransferase from Deinococcus geothermalis (strain DSM 11300 / CIP 105573 / AG-3a).